A 404-amino-acid chain; its full sequence is Zinc finger TRAF-type-containing protein 1 (404 aa).

The segment covering 1-13 (MSGAEEAGGGGPA) has biased composition (gly residues). The segment at 1–22 (MSGAEEAGGGGPAAGPAGSVPA) is disordered. The RING-type; degenerate zinc finger occupies 111 to 156 (CTVCLDLPKASVYQCTNGHLMCAGCFIHLLADARLKEEQATCPNCR). The TRAF-type zinc-finger motif lies at 152–225 (CPNCRCEISK…PWHGPFHELT (74 aa)).

Belongs to the ZFTRAF1 family. In terms of assembly, interacts with LGALS3.

The protein localises to the cytoplasm. Its subcellular location is the perinuclear region. This Homo sapiens (Human) protein is Zinc finger TRAF-type-containing protein 1.